The following is a 288-amino-acid chain: Protein RepA (288 aa).

Belongs to the initiator RepB protein family.

This protein is essential for plasmid replication; it is involved in copy control functions. The polypeptide is Protein RepA (repA) (Escherichia coli).